The chain runs to 85 residues: Small ribosomal subunit protein bS20 (85 aa).

The disordered stretch occupies residues 1 to 25 (MANIKSAIKRAKLSEERRAHNASIK).

The protein belongs to the bacterial ribosomal protein bS20 family.

Binds directly to 16S ribosomal RNA. The sequence is that of Small ribosomal subunit protein bS20 from Bacillus anthracis (strain A0248).